The following is a 770-amino-acid chain: Conserved oligomeric Golgi complex subunit 7 (770 aa).

The protein belongs to the COG7 family. Component of the conserved oligomeric Golgi complex which is composed of eight different subunits and is required for normal Golgi morphology and localization.

Its subcellular location is the golgi apparatus membrane. In terms of biological role, required for normal Golgi function. The chain is Conserved oligomeric Golgi complex subunit 7 (COG7) from Homo sapiens (Human).